Reading from the N-terminus, the 88-residue chain is Putative membrane protein insertion efficiency factor (88 aa).

The tract at residues 68–88 (VPPPNSDTRARGEADARSHRL) is disordered. Basic and acidic residues predominate over residues 75–88 (TRARGEADARSHRL).

Belongs to the UPF0161 family.

The protein resides in the cell inner membrane. Functionally, could be involved in insertion of integral membrane proteins into the membrane. This is Putative membrane protein insertion efficiency factor from Burkholderia cenocepacia (strain ATCC BAA-245 / DSM 16553 / LMG 16656 / NCTC 13227 / J2315 / CF5610) (Burkholderia cepacia (strain J2315)).